Reading from the N-terminus, the 142-residue chain is Small ribosomal subunit protein uS12 (142 aa).

The tract at residues 1-44 is disordered; it reads MANGKYAARKLKQDRQQRRWSDSEYARRERGLGAKSDPLEGAPQ. Positions 11–32 are enriched in basic and acidic residues; the sequence is LKQDRQQRRWSDSEYARRERGL.

It belongs to the universal ribosomal protein uS12 family. As to quaternary structure, part of the 30S ribosomal subunit.

With S4 and S5 plays an important role in translational accuracy. Located at the interface of the 30S and 50S subunits. This is Small ribosomal subunit protein uS12 from Haloquadratum walsbyi (strain DSM 16790 / HBSQ001).